The following is a 257-amino-acid chain: Transmembrane protein C257L (257 aa).

The next 2 helical transmembrane spans lie at 123–143 (LELLGYSPTPIIGGDFMFTAL) and 163–183 (MMIFFLIILLCVILGIFYVLV).

It belongs to the asfivirus C257R family.

It is found in the host membrane. It localises to the virion. The sequence is that of Transmembrane protein C257L from African swine fever virus (strain Badajoz 1971 Vero-adapted) (Ba71V).